We begin with the raw amino-acid sequence, 563 residues long: Chitinase A (563 aa).

Positions 1–23 are cleaved as a signal peptide; that stretch reads MRKFNKPLLALLIGSTLCSAAQA. A GH18 domain is found at 158 to 559; sequence KVVGSYFVEW…NSMNASLGNS (402 aa). The Proton donor role is filled by E315.

The protein belongs to the glycosyl hydrolase 18 family. Chitinase class II subfamily.

The enzyme catalyses Random endo-hydrolysis of N-acetyl-beta-D-glucosaminide (1-&gt;4)-beta-linkages in chitin and chitodextrins.. The sequence is that of Chitinase A (chiA) from Serratia marcescens.